The following is a 346-amino-acid chain: Melatonin receptor type 1C (346 aa).

Topologically, residues 1 to 26 (MERPGSNGSCSGCRLEGGPAARAASG) are extracellular. An N-linked (GlcNAc...) asparagine glycan is attached at Asn7. The chain crosses the membrane as a helical span at residues 27-47 (LAAVLIVTIVVDVLGNALVIL). Topologically, residues 48-60 (SVLRNKKLRNAGN) are cytoplasmic. Residues 61-81 (IFVVSLSVADLVVAVYPYPLI) traverse the membrane as a helical segment. The Extracellular portion of the chain corresponds to 82-99 (LSAIFHNGWTMGNIHCQI). The cysteines at positions 97 and 174 are disulfide-linked. The helical transmembrane segment at 100-120 (SGFLMGLSVIGSIFNITAIAI) threads the bilayer. Residues 121–139 (NRYCYICHSLRYDKLFNLK) lie on the Cytoplasmic side of the membrane. A helical transmembrane segment spans residues 140–160 (NTCCYICLTWTLTVVAIVPNF). Residues 161-184 (FVGSLQYDPRIYSCTFAQTVSTSY) lie on the Extracellular side of the membrane. A helical membrane pass occupies residues 185 to 205 (TITVVVVHFIVPLSIVTFCYL). At 206 to 237 (RIWILVIQVKHRVRQDCKQKIRAADIRNFLTM) the chain is on the cytoplasmic side. Residues 238–258 (FVVFVLFAVCWGPLNFIGLAV) traverse the membrane as a helical segment. Residues 259-271 (SINPSKVQPHIPE) are Extracellular-facing. The helical transmembrane segment at 272-292 (WLFVLSYFMAYFNSCLNAVIY) threads the bilayer. At 293–346 (GLLNQNFRKEYKRILLMLRTPRLLFIDVSKGGTEGLKSKPSPAVTNNNQAEIHL) the chain is on the cytoplasmic side. Residues 326 to 346 (EGLKSKPSPAVTNNNQAEIHL) are disordered. The span at 335–346 (AVTNNNQAEIHL) shows a compositional bias: polar residues.

This sequence belongs to the G-protein coupled receptor 1 family. In terms of tissue distribution, expressed in optic tectum, neostriatum, hypothalamus, thalamus and pineal gland, less in cerebellum and retina.

The protein resides in the cell membrane. In terms of biological role, high affinity receptor for melatonin. The activity of this receptor is mediated by pertussis toxin sensitive G proteins that inhibits adenylate cyclase activity. This Gallus gallus (Chicken) protein is Melatonin receptor type 1C.